We begin with the raw amino-acid sequence, 282 residues long: L-allo-isoleucyltransferase (282 aa).

Residue cysteine 105 is the Acyl-thioester intermediate of the active site. The 93-residue stretch at histidine 169 to glycine 261 folds into the AB hydrolase-1 domain.

The protein belongs to the AB hydrolase superfamily.

The catalysed reaction is holo-[CmaD peptidyl-carrier protein] + L-alloisoleucyl-[CmaA peptidyl-carrier protein] = L-alloisoleucyl-[CmaD peptidyl-carrier protein] + holo-[CmaA peptidyl-carrier protein]. In terms of biological role, involved in the biosynthesis of the phytotoxin coronatine (COR). Catalyzes the transfer of the aminoacyl group covalently attached to the pantetheinyl arm of CmaA to the holo-pantetheinyl arm of CmaD. During the shuttling process, CmaE generates a covalent-aminoacyl-S-Cys enzyme intermediate by the action of its donor substrate L-aminoacyl-S-CmaA and delivers it to the sulfhydryl group attached to the phosphopantetheinyl arm on CmaD. The polypeptide is L-allo-isoleucyltransferase (Pseudomonas savastanoi pv. glycinea (Pseudomonas syringae pv. glycinea)).